Here is a 343-residue protein sequence, read N- to C-terminus: Homeobox-leucine zipper protein HOX16 (343 aa).

Positions 74-133 (LPEKKRRLTPEQVHLLERSFEEENKLEPERKTELARKLGLQPRQVAVWFQNRRARWKTKQ) form a DNA-binding region, homeobox. A leucine-zipper region spans residues 132–176 (KQLERDFDRLKASFDALRADHDALLQDNHRLHSQVMSLTEKLQEK). A disordered region spans residues 218 to 239 (FEEQQEQQVKAEDRLSTGSGGS).

This sequence belongs to the HD-ZIP homeobox family. Class I subfamily. Expressed in seedlings, stems, leaf sheaths and blades and panicles.

It localises to the nucleus. In terms of biological role, probable transcription factor. The sequence is that of Homeobox-leucine zipper protein HOX16 (HOX16) from Oryza sativa subsp. japonica (Rice).